A 274-amino-acid polypeptide reads, in one-letter code: 4-hydroxy-tetrahydrodipicolinate reductase (274 aa).

NAD(+) is bound by residues 8–13, E34, 102–104, and 128–131; these read GALGRM, GTT, and SQNF. H160 serves as the catalytic Proton donor/acceptor. H161 serves as a coordination point for (S)-2,3,4,5-tetrahydrodipicolinate. K164 serves as the catalytic Proton donor. Position 170–171 (170–171) interacts with (S)-2,3,4,5-tetrahydrodipicolinate; sequence GT.

The protein belongs to the DapB family.

Its subcellular location is the cytoplasm. The catalysed reaction is (S)-2,3,4,5-tetrahydrodipicolinate + NAD(+) + H2O = (2S,4S)-4-hydroxy-2,3,4,5-tetrahydrodipicolinate + NADH + H(+). It carries out the reaction (S)-2,3,4,5-tetrahydrodipicolinate + NADP(+) + H2O = (2S,4S)-4-hydroxy-2,3,4,5-tetrahydrodipicolinate + NADPH + H(+). The protein operates within amino-acid biosynthesis; L-lysine biosynthesis via DAP pathway; (S)-tetrahydrodipicolinate from L-aspartate: step 4/4. In terms of biological role, catalyzes the conversion of 4-hydroxy-tetrahydrodipicolinate (HTPA) to tetrahydrodipicolinate. This is 4-hydroxy-tetrahydrodipicolinate reductase from Methanocaldococcus jannaschii (strain ATCC 43067 / DSM 2661 / JAL-1 / JCM 10045 / NBRC 100440) (Methanococcus jannaschii).